An 810-amino-acid chain; its full sequence is AMP deaminase (810 aa).

Polar residues predominate over residues 1–10; that stretch reads MDNQATQRLN. Disordered regions lie at residues 1–61 and 114–137; these read MDNQ…SHES and AAMN…PRTL. A phosphoserine mark is found at Ser-19, Ser-58, and Ser-61. The span at 125-137 shows a compositional bias: polar residues; it reads HASQNSGGKPRTL. Ser-138 carries the post-translational modification Phosphoserine. Zn(2+) is bound by residues His-362 and His-364. Residues His-364 and 433–438 contribute to the substrate site; that span reads KFNLKY. A Zn(2+)-binding site is contributed by His-630. Glu-633 provides a ligand contact to substrate. The active-site Proton acceptor is His-652. Position 707 (Asp-707) interacts with Zn(2+). 708 to 711 contacts substrate; the sequence is DPLQ.

It belongs to the metallo-dependent hydrolases superfamily. Adenosine and AMP deaminases family. Homotetramer. Zn(2+) serves as cofactor.

It carries out the reaction AMP + H2O + H(+) = IMP + NH4(+). It participates in purine metabolism; IMP biosynthesis via salvage pathway; IMP from AMP: step 1/1. In terms of biological role, AMP deaminase plays a critical role in energy metabolism. This chain is AMP deaminase (AMD1), found in Saccharomyces cerevisiae (strain ATCC 204508 / S288c) (Baker's yeast).